Consider the following 615-residue polypeptide: MVSGPLALRWCAWAGRGDMGPDMELPSHSKQLLLQLNQQRTKGFLCDVIIMVENSIFRAHKNVLAASSIYFKSLVLHDNLINLDTDMVSSTVFQQILDFIYTGKLLPSDQPAEPNFSTLLTAASYLQLPELAALCRRKLKRAGKPFGSGRAGSTGMGRPPRSQRLSTASVIQARYQGLVDGRKGAHAPQELPQAKGSDDELFLGGSNQDSVQGLGRAVCPAGGEAGLGGCSSSTNGSSGGCEQELGLDLSKKSPPLPPATPGPHLTPDDAAQLSDSQHGSPPAASAPPVANSASYSELGGTPDEPMDLEGAEDNHLSLLEAPGGQPRKSLRHSTRKKEWGKKEPVAGSPFERREAGPKGPCPGEEGEGVGDRVPNGILASGAGPSGPYGEPPYPCKEEEENGKDASEDSAQSGSEGGSGHASAHYMYRQEGYETVSYGDNLYVCIPCAKGFPSSEQLNAHVETHTEEELFIKEEGAYETGSGGAEEEAEDLSAPSAAYTAEPRPFKCSVCEKTYKDPATLRQHEKTHWLTRPFPCNICGKMFTQRGTMTRHMRSHLGLKPFACDECGMRFTRQYRLTEHMRVHSGEKPYECQLCGGKFTQQRNLISHLRMHTSPS.

The BTB domain maps to 46–109 (CDVIIMVENS…IYTGKLLPSD (64 aa)). The segment at 144 to 167 (KPFGSGRAGSTGMGRPPRSQRLST) is disordered. Phosphoserine is present on residues Ser166, Ser169, and Ser197. Disordered regions lie at residues 182 to 208 (RKGAHAPQELPQAKGSDDELFLGGSNQ) and 229 to 421 (GCSS…SGHA). The tract at residues 246 to 250 (GLDLS) is binding to CtBP. Positions 280-296 (SPPAASAPPVANSASYS) are enriched in low complexity. The segment covering 336 to 356 (KKEWGKKEPVAGSPFERREAG) has biased composition (basic and acidic residues). Ser348 bears the Phosphoserine mark. Residues 379 to 388 (ASGAGPSGPY) are compositionally biased toward low complexity. Residue Ser412 is modified to Phosphoserine. C2H2-type zinc fingers lie at residues 442–469 (YVCIPCAKGFPSSEQLNAHVETHTEEEL), 505–532 (FKCSVCEKTYKDPATLRQHEKTHWLTRP), 533–560 (FPCNICGKMFTQRGTMTRHMRSHLGLKP), 561–588 (FACDECGMRFTRQYRLTEHMRVHSGEKP), and 589–615 (YECQLCGGKFTQQRNLISHLRMHTSPS).

Belongs to the krueppel C2H2-type zinc-finger protein family. Hic subfamily. Self-associates. Interacts with HIC1. Highest levels in cerebellum.

The protein resides in the nucleus. Functionally, transcriptional repressor. In Homo sapiens (Human), this protein is Hypermethylated in cancer 2 protein (HIC2).